Consider the following 144-residue polypeptide: Monobin (144 aa).

A signal peptide spans 1–16 (MRLLALFAFAVAVVSA). A Pyrrolidone carboxylic acid modification is found at Q17. The 56-residue stretch at 18-73 (RNQMCQQPRTQGSCDASNQITKFFYTGSGCTSAPVCSDTDGGYGTEDECIQACTVQ) folds into the BPTI/Kunitz inhibitor 1 domain. Cystine bridges form between C22-C70, C31-C53, and C47-C66. Residues 74 to 85 (GGHHNEGAGEEG) are linker. Positions 86–139 (CSGDPPRGDCGGQVEERYYFDSTTRTCQTFEYRGCSSGNPDNSYETEIECEIAC) constitute a BPTI/Kunitz inhibitor domain. Intrachain disulfides connect C86-C139, C95-C120, and C112-C135. The short motif at 92-94 (RGD) is the Cell attachment site element.

In terms of processing, the N-terminus is blocked. Expressed in salivary glands.

Its subcellular location is the cytoplasmic vesicle. The protein resides in the secretory vesicle. It is found in the secreted. Functionally, tick salivary thrombin inhibitor that plays an important part in the anti-hemostatic strategy of ticks. The chain is Monobin from Argas monolakensis (Mono lake bird tick).